The chain runs to 218 residues: Dual specificity protein phosphatase TpbA (218 aa).

An N-terminal signal peptide occupies residues 1 to 28 (MHRSPLAWLRLLLAAVLGAFLLGGPLHA). In terms of domain architecture, Tyrosine-protein phosphatase spans 44–188 (DPSINLYRMS…YVRGADVDGL (145 aa)). The active-site Proton donor/acceptor is the aspartate 105. The active-site Phosphocysteine intermediate is the cysteine 132.

The protein belongs to the protein-tyrosine phosphatase family.

Its subcellular location is the periplasm. It carries out the reaction O-phospho-L-tyrosyl-[protein] + H2O = L-tyrosyl-[protein] + phosphate. The catalysed reaction is O-phospho-L-threonyl-[protein] + H2O = L-threonyl-[protein] + phosphate. The enzyme catalyses O-phospho-L-seryl-[protein] + H2O = L-seryl-[protein] + phosphate. Phosphatase that regulates diverse phenotypes in P.aeruginosa via regulation of the concentration of cellular c-di-GMP. Acts by dephosphorylating the membrane-anchored diguanylate cyclase TpbB at tyrosine and serine/threonine sites, leading to inactivation of TpbB and reduced c-di-GMP production. In vitro shows phosphatase activity toward p-nitrophenyl phosphate (pNPP) and tyrosine phosphopeptides. Can efficiently dephosphorylate two phosphorylated peptides derived from the periplasmic domain of TpbB, with a strong preference for Tyr-48 over Tyr-62. The polypeptide is Dual specificity protein phosphatase TpbA (Pseudomonas aeruginosa (strain ATCC 15692 / DSM 22644 / CIP 104116 / JCM 14847 / LMG 12228 / 1C / PRS 101 / PAO1)).